The primary structure comprises 431 residues: MANSC domain-containing protein 1 (431 aa).

The N-terminal stretch at 1 to 26 (MFFGGKGSLTYTLVIICFLTLRLAAS) is a signal peptide. Residues 27 to 385 (QNCLNKSLED…QYGLPFEKWL (359 aa)) are Extracellular-facing. N-linked (GlcNAc...) asparagine glycosylation is present at N31. Residues 33–117 (SLEDVVIDIQ…LKPAKGLRSY (85 aa)) enclose the MANSC domain. N222 and N251 each carry an N-linked (GlcNAc...) asparagine glycan. A disordered region spans residues 236 to 279 (HTTSATPKPAIRLPTNASVTPSGTSQPQLATTSPPVTTVTSQPP). Polar residues predominate over residues 250-265 (TNASVTPSGTSQPQLA). Over residues 266–279 (TTSPPVTTVTSQPP) the composition is skewed to low complexity. Residues N327 and N352 are each glycosylated (N-linked (GlcNAc...) asparagine). The segment at 352 to 372 (NKTASWEGREASPGRSSQGNV) is disordered. The helical transmembrane segment at 386–408 (LIGSLLFGVLFLVIGLVLLGRIL) threads the bilayer. At 409 to 431 (SESLRRKRYSRLDYLINGIYVDI) the chain is on the cytoplasmic side.

Its subcellular location is the membrane. The sequence is that of MANSC domain-containing protein 1 (MANSC1) from Macaca fascicularis (Crab-eating macaque).